We begin with the raw amino-acid sequence, 191 residues long: MEYFDMRKMSVNLWRNAAGETREICTFPPAKRDFYWRASIASIAANGEFSLFPGMERIVTLLEGGEMFLESADRFNHTLKPLQPFAFAADQVVKAKLTAGQMSMDFNIMTRLDVCKAKVRIAERTFTTFGSRGGVVFVINGAWQLGDKLLTTDQGACWFDGRHTLRLLQPQGKLLFSEINWLAGYSPDQVQ.

It belongs to the Ves family.

This chain is Protein Ves, found in Escherichia coli O127:H6 (strain E2348/69 / EPEC).